Here is a 469-residue protein sequence, read N- to C-terminus: Adenosylhomocysteinase (469 aa).

Thr63, Asp139, and Glu164 together coordinate substrate. 165–167 (TTT) contacts NAD(+). Substrate contacts are provided by Lys194 and Asp198. NAD(+) is bound by residues Asn199, 228–233 (GYGDVG), Glu251, Asn300, 321–323 (IGH), and Asn375.

Belongs to the adenosylhomocysteinase family. NAD(+) serves as cofactor.

The protein localises to the cytoplasm. The enzyme catalyses S-adenosyl-L-homocysteine + H2O = L-homocysteine + adenosine. It participates in amino-acid biosynthesis; L-homocysteine biosynthesis; L-homocysteine from S-adenosyl-L-homocysteine: step 1/1. Functionally, may play a key role in the regulation of the intracellular concentration of adenosylhomocysteine. The sequence is that of Adenosylhomocysteinase from Pseudomonas putida (strain ATCC 700007 / DSM 6899 / JCM 31910 / BCRC 17059 / LMG 24140 / F1).